The following is a 202-amino-acid chain: uncharacterized protein (202 aa).

Residues 116 to 196 (LDLHGMTCSE…GKGTTWVLLK (81 aa)) form the Smr domain.

This is an uncharacterized protein from Treponema pallidum (strain Nichols).